Here is a 570-residue protein sequence, read N- to C-terminus: Protein FAM227A (570 aa).

The segment covering 87–99 (LREKTRSSPEDKV) has biased composition (basic and acidic residues). Disordered stretches follow at residues 87–112 (LREKTRSSPEDKVKRQRKSQYSCKGS), 336–374 (PAQSRKFYHPQSSSANSPSEKTSSAKQNSEKSLRMQNTA), and 519–570 (KAAD…TSKP). Tyr-343 carries the post-translational modification Phosphotyrosine. A compositionally biased stretch (polar residues) spans 345 to 362 (PQSSSANSPSEKTSSAKQ). Residues Ser-348 and Ser-349 each carry the phosphoserine modification. Basic and acidic residues-rich tracts occupy residues 363–374 (NSEKSLRMQNTA) and 540–562 (SPDKKTKEGKGGEGKRRETEVEH).

The protein belongs to the FAM227 family.

The polypeptide is Protein FAM227A (FAM227A) (Homo sapiens (Human)).